Reading from the N-terminus, the 575-residue chain is Alpha-(1,6)-fucosyltransferase (575 aa).

Residues 1–9 (MRPWTGSWR) lie on the Cytoplasmic side of the membrane. A helical; Signal-anchor for type II membrane protein membrane pass occupies residues 10–30 (WIMLILFAWGTLLFYIGGHLV). The Lumenal segment spans residues 31 to 575 (RDNDHSDHSS…KYPTYPEADK (545 aa)). 3 disulfide bridges follow: Cys-204/Cys-266, Cys-212/Cys-230, and Cys-218/Cys-222. Residues 206 to 493 (KAKKLVCNIN…PDASANFRSL (288 aa)) form the GT23 domain. Position 278 is a phosphoserine (Ser-278). Positions 299–305 (PRPPYLP) match the SH3-binding motif. The segment at 365–366 (RR) is important for donor substrate binding. A disulfide bridge connects residues Cys-465 and Cys-472. Residues 502 to 563 (PNAHNQIAIY…PSYKVREKIE (62 aa)) enclose the SH3 domain.

This sequence belongs to the glycosyltransferase 23 family. In terms of processing, tyrosine phosphorylated by PKDCC/VLK. Highest expression in brain.

The protein resides in the golgi apparatus. The protein localises to the golgi stack membrane. The catalysed reaction is N(4)-{beta-D-GlcNAc-(1-&gt;2)-alpha-D-Man-(1-&gt;3)-[beta-D-GlcNAc-(1-&gt;2)-alpha-D-Man-(1-&gt;6)]-beta-D-Man-(1-&gt;4)-beta-D-GlcNAc-(1-&gt;4)-beta-D-GlcNAc}-L-asparaginyl-[protein] + GDP-beta-L-fucose = an N(4)-{beta-D-GlcNAc-(1-&gt;2)-alpha-D-Man-(1-&gt;3)-[beta-D-GlcNAc-(1-&gt;2)-alpha-D-Man-(1-&gt;6)]-beta-D-Man-(1-&gt;4)-beta-D-GlcNAc-(1-&gt;4)-[alpha-L-Fuc-(1-&gt;6)]-beta-D-GlcNAc}-L-asparaginyl-[protein] + GDP + H(+). It functions in the pathway protein modification; protein glycosylation. In terms of biological role, catalyzes the addition of fucose in alpha 1-6 linkage to the first GlcNAc residue, next to the peptide chains in N-glycans. The polypeptide is Alpha-(1,6)-fucosyltransferase (FUT8) (Sus scrofa (Pig)).